A 145-amino-acid chain; its full sequence is Neuropeptide-like protein 68 (145 aa).

Positions 1 to 15 are cleaved as a signal peptide; the sequence is MLLVLLFSLFSVGFG. Residues 41 to 65 are disordered; the sequence is SSSSEDDTPDFPSLRDKRGVDPMSI.

It is found in the secreted. The protein is Neuropeptide-like protein 68 of Caenorhabditis elegans.